The sequence spans 739 residues: Photosystem I P700 chlorophyll a apoprotein A1 (739 aa).

The next 8 helical transmembrane spans lie at 61–84 (IFSA…FHGA), 147–170 (LYVT…FHYH), 186–210 (MNHH…HVSL), 281–299 (VAHH…GHMY), 336–359 (WHAQ…HHMY), 375–401 (LSLF…IFMV), 423–445 (AIIS…LYIH), and 520–538 (FMVH…LILL). Residues cysteine 562 and cysteine 571 each coordinate [4Fe-4S] cluster. The next 2 helical transmembrane spans lie at 578–599 (HVFL…HFSW) and 653–675 (LSAY…MFLF). Histidine 664 provides a ligand contact to chlorophyll a'. Methionine 672 and tyrosine 680 together coordinate chlorophyll a. Tryptophan 681 is a binding site for phylloquinone. The helical transmembrane segment at 713–733 (AVGVAHYLLGGIVTTWAFFLA) threads the bilayer.

Belongs to the PsaA/PsaB family. The PsaA/B heterodimer binds the P700 chlorophyll special pair and subsequent electron acceptors. PSI consists of a core antenna complex that captures photons, and an electron transfer chain that converts photonic excitation into a charge separation. The cyanobacterial PSI reaction center is composed of one copy each of PsaA,B,C,D,E,F,I,J,K,L,M and X, and forms trimeric complexes. PSI electron transfer chain: 5 chlorophyll a, 1 chlorophyll a', 2 phylloquinones and 3 4Fe-4S clusters. PSI core antenna: 90 chlorophyll a, 22 carotenoids, 3 phospholipids and 1 galactolipid. P700 is a chlorophyll a/chlorophyll a' dimer, A0 is one or more chlorophyll a, A1 is one or both phylloquinones and FX is a shared 4Fe-4S iron-sulfur center. serves as cofactor.

Its subcellular location is the cellular thylakoid membrane. It carries out the reaction reduced [plastocyanin] + hnu + oxidized [2Fe-2S]-[ferredoxin] = oxidized [plastocyanin] + reduced [2Fe-2S]-[ferredoxin]. In terms of biological role, psaA and PsaB bind P700, the primary electron donor of photosystem I (PSI), as well as the electron acceptors A0, A1 and FX. PSI is a plastocyanin/cytochrome c6-ferredoxin oxidoreductase, converting photonic excitation into a charge separation, which transfers an electron from the donor P700 chlorophyll pair to the spectroscopically characterized acceptors A0, A1, FX, FA and FB in turn. Oxidized P700 is reduced on the lumenal side of the thylakoid membrane by plastocyanin or cytochrome c6. This is Photosystem I P700 chlorophyll a apoprotein A1 from Picosynechococcus sp. (strain ATCC 27264 / PCC 7002 / PR-6) (Agmenellum quadruplicatum).